Here is a 118-residue protein sequence, read N- to C-terminus: UPF0295 protein BC_0520 (118 aa).

Transmembrane regions (helical) follow at residues 12–32 and 43–63; these read IRTF…LGVF and FMMV…WIGM.

Belongs to the UPF0295 family.

Its subcellular location is the cell membrane. The chain is UPF0295 protein BC_0520 from Bacillus cereus (strain ATCC 14579 / DSM 31 / CCUG 7414 / JCM 2152 / NBRC 15305 / NCIMB 9373 / NCTC 2599 / NRRL B-3711).